The chain runs to 462 residues: DIMBOA UDP-glucosyltransferase BX9 (462 aa).

Histidine 24 serves as the catalytic Proton acceptor. Residue histidine 24 participates in an anthocyanidin binding. Aspartate 115 (charge relay) is an active-site residue. Residues threonine 137, alanine 336, glutamine 338, histidine 353, tryptophan 356, asparagine 357, serine 358, and glutamate 361 each contribute to the UDP-alpha-D-glucose site. Glycine 376 is an an anthocyanidin binding site. The UDP-alpha-D-glucose site is built by aspartate 377 and glutamine 378.

Belongs to the UDP-glycosyltransferase family. Mg(2+) serves as cofactor. The cofactor is Ca(2+). In terms of tissue distribution, expressed at the same levels in roots and shoots.

The enzyme catalyses DIMBOA + UDP-alpha-D-glucose = DIMBOA beta-D-glucoside + UDP + H(+). It carries out the reaction DIBOA + UDP-alpha-D-glucose = DIBOA beta-D-glucoside + UDP + H(+). Glucosyltransferase involved in the last step of benzoxazinoid glucoside biosynthesis. Catalyzes the glucosylation of hydroxamic acids utilizing UDP-glucose as glucose doner, reducing the toxicity of these natural insecticides for storage. Can use DIMBOA and DIBOA as substrates, HMBOA (2-hydroxy-7-methoxy-2H-1,4-benzoxazin-3(4H)-one) and HBOA (2-hydroxy-2H-1,4-benzoxazin-3(4H)-one) with a lower efficiency, but not indole acetic acid or quercitin. The chain is DIMBOA UDP-glucosyltransferase BX9 (BX9) from Zea mays (Maize).